The sequence spans 283 residues: uncharacterized protein (283 aa).

Helical transmembrane passes span 8 to 28 (LILSIVGNILLGLIKIIIGYV), 38 to 58 (GIHSLSDVITSIIGIIGVKIA), 73 to 93 (FECLFSFFIGLALFFTAYEIG), 100 to 120 (IIYGEVIEVNAIMVGVAILSI), and 175 to 195 (AIAGIIVALMIAKVAFDICLT).

This sequence belongs to the cation diffusion facilitator (CDF) transporter (TC 2.A.4) family.

Its subcellular location is the cell membrane. This is an uncharacterized protein from Methanocaldococcus jannaschii (strain ATCC 43067 / DSM 2661 / JAL-1 / JCM 10045 / NBRC 100440) (Methanococcus jannaschii).